A 440-amino-acid chain; its full sequence is Chromosome partition protein MukF (440 aa).

The interval 208 to 236 is leucine-zipper; it reads LSETSGTLRELQDTLEAAGDKLQANLLRI.

The protein belongs to the MukF family. In terms of assembly, interacts, and probably forms a ternary complex, with MukE and MukB via its C-terminal region. The complex formation is stimulated by calcium or magnesium. It is required for an interaction between MukE and MukB.

The protein localises to the cytoplasm. Its subcellular location is the nucleoid. Involved in chromosome condensation, segregation and cell cycle progression. May participate in facilitating chromosome segregation by condensation DNA from both sides of a centrally located replisome during cell division. Not required for mini-F plasmid partitioning. Probably acts via its interaction with MukB and MukE. Overexpression results in anucleate cells. It has a calcium binding activity. This is Chromosome partition protein MukF from Salmonella agona (strain SL483).